Consider the following 439-residue polypeptide: Skin secretory protein xP2 (439 aa).

The N-terminal stretch at 1-22 (MNHKLFCVHFLLLILSVCYIQG) is a signal peptide. A disordered region spans residues 25 to 351 (AGGEPAPAEG…VEVGPKTEDC (327 aa)). 5 consecutive repeat copies span residues 26–33 (GGEPAPAE), 34–41 (GVAPAPAE), 42–51 (GGAPAPAPAE), 52–59 (GEAPAPAE), and 60–69 (GGAPAPAPAE). Residues 26–343 (GGEPAPAEGV…APAPAPAPVE (318 aa)) form a 33 X approximate repeats of G-G(0,1)-[EV](0,1)-A-P-[A-P](1,3)-A-E region. Low complexity predominate over residues 26-345 (GGEPAPAEGV…APAPAPVEVG (320 aa)). The 6; approximate repeat unit spans residues 70-77 (GAEPAPAD). Repeat copies occupy residues 78 to 87 (GGAPAPAPAE), 88 to 97 (GGAPAPAPAE), 98 to 107 (GGAPAPAPAE), 108 to 115 (GGAPAPAE), 116 to 125 (GGAPAPAPAE), 126 to 135 (GEAPAPAPAE), 136 to 145 (GEAPAPAPAE), 146 to 153 (GEAPAPAE), and 154 to 163 (GEAPAPAPAE). A 16; approximate repeat occupies 164–173 (VEAPAPAPAE). Repeat copies occupy residues 174–183 (GEAPAPAPAE), 184–193 (GEAPAPAPAE), 194–203 (GEAPAPAPAE), 204–215 (GEAPAPAPAPAE), 216–225 (GEAPAPAPAE), 226–235 (GEAPAPAPAE), 236–245 (GEAPAPAPAE), 246–255 (GEAPAPAPAE), 256–265 (GEAPAPAPAE), 266–275 (GEAPAPAPAE), 276–285 (GEAPAPAPAE), 286–293 (GEAPAPAE), 294–303 (GEAPAPAPAE), and 304–313 (GEAPAPAPAE). A 31; approximate repeat occupies 314–321 (GGAPSPAE). Residues 322 to 331 (GGAPAAAPAE) form a 32; approximate repeat. A 33; approximate repeat occupies 332-343 (GGAPAPAPAPVE). P-type domains lie at 349-392 (EDCK…FFPR) and 396-439 (AQCL…FHQK). Intrachain disulfides connect cysteine 351/cysteine 377, cysteine 361/cysteine 376, cysteine 371/cysteine 388, cysteine 398/cysteine 424, cysteine 408/cysteine 423, and cysteine 418/cysteine 435.

In terms of tissue distribution, skin.

It is found in the secreted. In terms of biological role, may act as a growth factor in the germinal layer of the epidermis. May also be involved in growth of regenerating glands and in protection of the skin from the external environment. This Xenopus laevis (African clawed frog) protein is Skin secretory protein xP2 (p2).